The chain runs to 532 residues: Membrane protein insertase YidC (532 aa).

5 helical membrane-spanning segments follow: residues 7–27 (FFIF…QSQM), 336–356 (LTIL…ITFI), 413–433 (GGFL…YMLI), 450–470 (LSSQ…MFFI), and 492–512 (PVIF…YYII).

It belongs to the OXA1/ALB3/YidC family. Type 1 subfamily. In terms of assembly, interacts with the Sec translocase complex via SecD. Specifically interacts with transmembrane segments of nascent integral membrane proteins during membrane integration.

The protein localises to the cell membrane. Its function is as follows. Required for the insertion and/or proper folding and/or complex formation of integral membrane proteins into the membrane. Involved in integration of membrane proteins that insert both dependently and independently of the Sec translocase complex, as well as at least some lipoproteins. Aids folding of multispanning membrane proteins. This is Membrane protein insertase YidC from Buchnera aphidicola subsp. Acyrthosiphon pisum (strain 5A).